We begin with the raw amino-acid sequence, 552 residues long: uncharacterized protein (552 aa).

This is an uncharacterized protein from Methanocaldococcus jannaschii (strain ATCC 43067 / DSM 2661 / JAL-1 / JCM 10045 / NBRC 100440) (Methanococcus jannaschii).